We begin with the raw amino-acid sequence, 387 residues long: 3-ketoacyl-CoA thiolase (387 aa).

Cysteine 91 acts as the Acyl-thioester intermediate in catalysis. Catalysis depends on proton acceptor residues histidine 343 and cysteine 373.

It belongs to the thiolase-like superfamily. Thiolase family. In terms of assembly, heterotetramer of two alpha chains (FadB) and two beta chains (FadA).

It is found in the cytoplasm. The enzyme catalyses an acyl-CoA + acetyl-CoA = a 3-oxoacyl-CoA + CoA. It functions in the pathway lipid metabolism; fatty acid beta-oxidation. Its function is as follows. Catalyzes the final step of fatty acid oxidation in which acetyl-CoA is released and the CoA ester of a fatty acid two carbons shorter is formed. The sequence is that of 3-ketoacyl-CoA thiolase from Erwinia tasmaniensis (strain DSM 17950 / CFBP 7177 / CIP 109463 / NCPPB 4357 / Et1/99).